Consider the following 1749-residue polypeptide: Transposon Ty1-NL2 Gag-Pol polyprotein (1749 aa).

4 stretches are compositionally biased toward polar residues: residues 1 to 23 (MESQ…SVTS), 48 to 60 (TKAN…TPAS), 71 to 97 (SPQT…NQAN), and 129 to 152 (QFPQ…GNTF). Disordered regions lie at residues 1–97 (MESQ…NQAN), 129–171 (QFPQ…YVRP), and 352–421 (GSRN…SKST). The span at 153–165 (TDSSSADSDMTST) shows a compositional bias: low complexity. The interval 299 to 401 (NNGIHINNKV…NSKSKTARAH (103 aa)) is RNA-binding. Residues 402 to 418 (NVSTSNNSPSTDNDSIS) show a composition bias toward low complexity. The active-site For protease activity; shared with dimeric partner is the Asp461. Residues 583–640 (NVHTSESTRKYPYPFIHRMLAHANAQTIRYSLKNNTITYFNESDVDWSSAIDYQCPDC) are integrase-type zinc finger-like. The Integrase catalytic domain occupies 660 to 835 (NSYEPFQYLH…AGLDISTLLP (176 aa)). Mg(2+)-binding residues include Asp671 and Asp736. The interval 945–1166 (PRNVLSKAVS…LGGIGDSNAY (222 aa)) is disordered. Over residues 954–963 (SPTDSTPPST) the composition is skewed to low complexity. Over residues 999 to 1009 (STPQISDIEST) the composition is skewed to polar residues. The segment covering 1032 to 1047 (ESSHTSKSKDFRHSDS) has biased composition (basic and acidic residues). 2 stretches are compositionally biased toward polar residues: residues 1048–1076 (YSDN…QTSE) and 1089–1100 (SIDTSSSESNSL). Residues 1172–1206 (KKRSLEDNETEIKVSRDTWNTKNMRSLEPPRSKKR) carry the Bipartite nuclear localization signal motif. Residues 1332 to 1470 (NNYYITQLDI…DILGLEIKYQ (139 aa)) enclose the Reverse transcriptase Ty1/copia-type domain. Residues Asp1340, Asp1421, Asp1422, Asp1604, Glu1646, and Asp1679 each contribute to the Mg(2+) site. The 143-residue stretch at 1604–1746 (DASYGNQPYY…IKTFKLLTNK (143 aa)) folds into the RNase H Ty1/copia-type domain.

As to quaternary structure, the capsid protein forms a homotrimer, from which the VLPs are assembled. The protease is a homodimer, whose active site consists of two apposed aspartic acid residues. Initially, virus-like particles (VLPs) are composed of the structural unprocessed proteins Gag and Gag-Pol, and also contain the host initiator methionine tRNA (tRNA(i)-Met) which serves as a primer for minus-strand DNA synthesis, and a dimer of genomic Ty RNA. Processing of the polyproteins occurs within the particle and proceeds by an ordered pathway, called maturation. First, the protease (PR) is released by autocatalytic cleavage of the Gag-Pol polyprotein yielding capsid protein p45 and a Pol-p154 precursor protein. This cleavage is a prerequisite for subsequent processing of Pol-p154 at the remaining sites to release the mature structural and catalytic proteins. Maturation takes place prior to the RT reaction and is required to produce transposition-competent VLPs.

It localises to the cytoplasm. Its subcellular location is the nucleus. The catalysed reaction is DNA(n) + a 2'-deoxyribonucleoside 5'-triphosphate = DNA(n+1) + diphosphate. It catalyses the reaction Endonucleolytic cleavage to 5'-phosphomonoester.. Functionally, capsid protein (CA) is the structural component of the virus-like particle (VLP), forming the shell that encapsulates the retrotransposons dimeric RNA genome. The particles are assembled from trimer-clustered units and there are holes in the capsid shells that allow for the diffusion of macromolecules. CA also has nucleocapsid-like chaperone activity, promoting primer tRNA(i)-Met annealing to the multipartite primer-binding site (PBS), dimerization of Ty1 RNA and initiation of reverse transcription. The aspartyl protease (PR) mediates the proteolytic cleavages of the Gag and Gag-Pol polyproteins after assembly of the VLP. In terms of biological role, reverse transcriptase/ribonuclease H (RT) is a multifunctional enzyme that catalyzes the conversion of the retro-elements RNA genome into dsDNA within the VLP. The enzyme displays a DNA polymerase activity that can copy either DNA or RNA templates, and a ribonuclease H (RNase H) activity that cleaves the RNA strand of RNA-DNA heteroduplexes during plus-strand synthesis and hydrolyzes RNA primers. The conversion leads to a linear dsDNA copy of the retrotransposon that includes long terminal repeats (LTRs) at both ends. Its function is as follows. Integrase (IN) targets the VLP to the nucleus, where a subparticle preintegration complex (PIC) containing at least integrase and the newly synthesized dsDNA copy of the retrotransposon must transit the nuclear membrane. Once in the nucleus, integrase performs the integration of the dsDNA into the host genome. This is Transposon Ty1-NL2 Gag-Pol polyprotein (TY1B-NL2) from Saccharomyces cerevisiae (strain ATCC 204508 / S288c) (Baker's yeast).